The sequence spans 355 residues: Type II methyltransferase M.MthZI (355 aa).

Belongs to the N(4)/N(6)-methyltransferase family. N(4) subfamily.

The catalysed reaction is a 2'-deoxycytidine in DNA + S-adenosyl-L-methionine = an N(4)-methyl-2'-deoxycytidine in DNA + S-adenosyl-L-homocysteine + H(+). Functionally, a beta subtype methylase that recognizes the double-stranded sequence 5'-CTAG-3', methylates C-1 on both strands, and protects the DNA from cleavage by the MthZI endonuclease. This chain is Type II methyltransferase M.MthZI, found in Methanothermobacter thermautotrophicus (Methanobacterium thermoformicicum).